Here is a 101-residue protein sequence, read N- to C-terminus: Small ribosomal subunit protein uS14 (101 aa).

It belongs to the universal ribosomal protein uS14 family. As to quaternary structure, part of the 30S ribosomal subunit. Contacts proteins S3 and S10.

Binds 16S rRNA, required for the assembly of 30S particles and may also be responsible for determining the conformation of the 16S rRNA at the A site. This is Small ribosomal subunit protein uS14 from Gluconacetobacter diazotrophicus (strain ATCC 49037 / DSM 5601 / CCUG 37298 / CIP 103539 / LMG 7603 / PAl5).